The sequence spans 258 residues: Lyso-ornithine lipid O-acyltransferase (258 aa).

Residues 7-29 (LLRSARLLGLVALGLGLAAWVSL) traverse the membrane as a helical segment.

The protein belongs to the 1-acyl-sn-glycerol-3-phosphate acyltransferase family. OlsA subfamily.

The protein resides in the membrane. It catalyses the reaction a lyso-ornithine lipid + a fatty acyl-[ACP] = an N(2)-[(3R)-3-(acyloxy)acyl]-L-ornithine lipid + holo-[ACP]. It participates in lipid metabolism. Its function is as follows. Catalyzes the second step in the formation of ornithine lipids, which are phosphorus-free membrane lipids. Uses acyl-acyl carrier protein (acyl-AcpP) as an acyl donor and converts lyso-ornithine lipid (LOL) into ornithine lipid (OL). The protein is Lyso-ornithine lipid O-acyltransferase of Pseudomonas aeruginosa (strain ATCC 15692 / DSM 22644 / CIP 104116 / JCM 14847 / LMG 12228 / 1C / PRS 101 / PAO1).